A 123-amino-acid chain; its full sequence is MPTINQLIAQPRKAQKARNKVPALNACPQKRGVCTRVYTTTPKKPNSALRKVAKVRLTNGFEVIGYIPGEGHNLQEHSVVMIRGGRVKDLPGVRYHILRGVLDTQGVKNRKQRRSKYGAKRPK.

Residue Asp89 is modified to 3-methylthioaspartic acid.

This sequence belongs to the universal ribosomal protein uS12 family. As to quaternary structure, part of the 30S ribosomal subunit. Contacts proteins S8 and S17. May interact with IF1 in the 30S initiation complex.

With S4 and S5 plays an important role in translational accuracy. Its function is as follows. Interacts with and stabilizes bases of the 16S rRNA that are involved in tRNA selection in the A site and with the mRNA backbone. Located at the interface of the 30S and 50S subunits, it traverses the body of the 30S subunit contacting proteins on the other side and probably holding the rRNA structure together. The combined cluster of proteins S8, S12 and S17 appears to hold together the shoulder and platform of the 30S subunit. In Methylorubrum extorquens (strain PA1) (Methylobacterium extorquens), this protein is Small ribosomal subunit protein uS12.